We begin with the raw amino-acid sequence, 48 residues long: MTNKNDGKDMRKNAPKGAQPGQPEPLSGSKKVKNRNHTRQKHNSSHDM.

The segment covering 1–12 has biased composition (basic and acidic residues); that stretch reads MTNKNDGKDMRK. A disordered region spans residues 1–48; sequence MTNKNDGKDMRKNAPKGAQPGQPEPLSGSKKVKNRNHTRQKHNSSHDM. Over residues 30 to 48 the composition is skewed to basic residues; that stretch reads KKVKNRNHTRQKHNSSHDM.

This sequence belongs to the SspP family.

It localises to the spore core. The protein is Small, acid-soluble spore protein P of Bacillus licheniformis (strain ATCC 14580 / DSM 13 / JCM 2505 / CCUG 7422 / NBRC 12200 / NCIMB 9375 / NCTC 10341 / NRRL NRS-1264 / Gibson 46).